Reading from the N-terminus, the 323-residue chain is o-succinylbenzoate synthase (323 aa).

K134 acts as the Proton donor in catalysis. Residues D162, E191, and D214 each contribute to the Mg(2+) site. K236 acts as the Proton acceptor in catalysis.

It belongs to the mandelate racemase/muconate lactonizing enzyme family. MenC type 1 subfamily. Requires a divalent metal cation as cofactor.

The enzyme catalyses (1R,6R)-6-hydroxy-2-succinyl-cyclohexa-2,4-diene-1-carboxylate = 2-succinylbenzoate + H2O. It functions in the pathway quinol/quinone metabolism; 1,4-dihydroxy-2-naphthoate biosynthesis; 1,4-dihydroxy-2-naphthoate from chorismate: step 4/7. The protein operates within quinol/quinone metabolism; menaquinone biosynthesis. Converts 2-succinyl-6-hydroxy-2,4-cyclohexadiene-1-carboxylate (SHCHC) to 2-succinylbenzoate (OSB). This chain is o-succinylbenzoate synthase, found in Yersinia pseudotuberculosis serotype IB (strain PB1/+).